The primary structure comprises 632 residues: 1-deoxy-D-xylulose-5-phosphate synthase (632 aa).

Residues H87 and 128–130 each bind thiamine diphosphate; that span reads GHS. D159 contacts Mg(2+). Thiamine diphosphate is bound by residues 160–161, N188, F295, and E377; that span reads GA. Position 188 (N188) interacts with Mg(2+).

The protein belongs to the transketolase family. DXPS subfamily. In terms of assembly, homodimer. It depends on Mg(2+) as a cofactor. Thiamine diphosphate serves as cofactor.

It carries out the reaction D-glyceraldehyde 3-phosphate + pyruvate + H(+) = 1-deoxy-D-xylulose 5-phosphate + CO2. It participates in metabolic intermediate biosynthesis; 1-deoxy-D-xylulose 5-phosphate biosynthesis; 1-deoxy-D-xylulose 5-phosphate from D-glyceraldehyde 3-phosphate and pyruvate: step 1/1. Its function is as follows. Catalyzes the acyloin condensation reaction between C atoms 2 and 3 of pyruvate and glyceraldehyde 3-phosphate to yield 1-deoxy-D-xylulose-5-phosphate (DXP). This Stutzerimonas stutzeri (strain A1501) (Pseudomonas stutzeri) protein is 1-deoxy-D-xylulose-5-phosphate synthase.